A 196-amino-acid polypeptide reads, in one-letter code: Imidazoleglycerol-phosphate dehydratase (196 aa).

The protein belongs to the imidazoleglycerol-phosphate dehydratase family.

It localises to the cytoplasm. It carries out the reaction D-erythro-1-(imidazol-4-yl)glycerol 3-phosphate = 3-(imidazol-4-yl)-2-oxopropyl phosphate + H2O. It functions in the pathway amino-acid biosynthesis; L-histidine biosynthesis; L-histidine from 5-phospho-alpha-D-ribose 1-diphosphate: step 6/9. This chain is Imidazoleglycerol-phosphate dehydratase, found in Clostridium novyi (strain NT).